Consider the following 570-residue polypeptide: MRVSKYLLSTQKETPANAEVISHQLMLRAGMIRRNASGLYSYLPTGLRVLRKVEAIVREEMNKAGAIEILMPMVQPADLWVETGRWDKFGPELLRFKDRHNRDFVLGPTHEEVITDLIRKEVSSYKQLPLNLYQIQTKFRDEVRPRFGVMRSREFLMKDAYSFHLDVDTMNETYEAMYQAYSNILSRMGLAFRPVLADTGSIGGSMSHEFHVLAQSGEDLIAYSTGSDYAANIEKAESPMPTEARGAATEALRLVDTPNAKTIAELVEQFGLDITKTVKTLIVKGATEEAPLVALIVRGDHELNEIKADKLDLVASPLEFAPEALIRDAIGAGPGSLGPVGLNMPVIIDHSVSVMSDFAAGANLDDKHYFGINWERDLPLAQAADIRNVVEGEPTPDGLGTYAMARGIEVGHIFQLGTNYSKSMNATVLDENGKSQVLLMGCYGVGVSRIVAAAIEQNFDDRGIVWPEAIAPFSVGILPMNMHKSHRVTDIAEQLYKDLSAVGIDVLLDDRKERPGVMFADMELIGIPHTVVIGDRNIDAGVFEYKNRRTGEKQDVPFDQIVDFLKNLQA.

The protein belongs to the class-II aminoacyl-tRNA synthetase family. ProS type 1 subfamily. Homodimer.

It localises to the cytoplasm. It carries out the reaction tRNA(Pro) + L-proline + ATP = L-prolyl-tRNA(Pro) + AMP + diphosphate. In terms of biological role, catalyzes the attachment of proline to tRNA(Pro) in a two-step reaction: proline is first activated by ATP to form Pro-AMP and then transferred to the acceptor end of tRNA(Pro). As ProRS can inadvertently accommodate and process non-cognate amino acids such as alanine and cysteine, to avoid such errors it has two additional distinct editing activities against alanine. One activity is designated as 'pretransfer' editing and involves the tRNA(Pro)-independent hydrolysis of activated Ala-AMP. The other activity is designated 'posttransfer' editing and involves deacylation of mischarged Ala-tRNA(Pro). The misacylated Cys-tRNA(Pro) is not edited by ProRS. The sequence is that of Proline--tRNA ligase from Shewanella sp. (strain ANA-3).